The sequence spans 230 residues: Probable phosphatase IndB (230 aa).

The active-site Nucleophile is the Asp8. Positions 8, 10, and 169 each coordinate Mg(2+). Asp10 (proton donor) is an active-site residue.

Belongs to the HAD-like hydrolase superfamily. Mg(2+) serves as cofactor.

Part of an operon that could be involved in the biosynthesis of the blue pigment indigoidine, which is implicated in pathogenicity and protection from oxidative stress. This chain is Probable phosphatase IndB, found in Dickeya dadantii (strain 3937) (Erwinia chrysanthemi (strain 3937)).